Consider the following 172-residue polypeptide: 3-phenylpropionate/cinnamic acid dioxygenase subunit beta (172 aa).

Belongs to the bacterial ring-hydroxylating dioxygenase beta subunit family. As to quaternary structure, this dioxygenase system consists of four proteins: the two subunits of the hydroxylase component (HcaE and HcaF), a ferredoxin (HcaC) and a ferredoxin reductase (HcaD).

It carries out the reaction 3-phenylpropanoate + NADH + O2 + H(+) = 3-(cis-5,6-dihydroxycyclohexa-1,3-dien-1-yl)propanoate + NAD(+). The catalysed reaction is (E)-cinnamate + NADH + O2 + H(+) = (2E)-3-(cis-5,6-dihydroxycyclohexa-1,3-dien-1-yl)prop-2-enoate + NAD(+). Its pathway is aromatic compound metabolism; 3-phenylpropanoate degradation. In terms of biological role, part of the multicomponent 3-phenylpropionate dioxygenase. Converts 3-phenylpropionic acid (PP) and cinnamic acid (CI) into 3-phenylpropionate-dihydrodiol (PP-dihydrodiol) and cinnamic acid-dihydrodiol (CI-dihydrodiol), respectively. In Shigella sonnei (strain Ss046), this protein is 3-phenylpropionate/cinnamic acid dioxygenase subunit beta.